Reading from the N-terminus, the 155-residue chain is Deoxyuridine 5'-triphosphate nucleotidohydrolase (155 aa).

Substrate contacts are provided by residues 72–74 (RSG), Asn-85, 89–91 (TVD), and Lys-99.

The protein belongs to the dUTPase family. Mg(2+) is required as a cofactor.

It catalyses the reaction dUTP + H2O = dUMP + diphosphate + H(+). It participates in pyrimidine metabolism; dUMP biosynthesis; dUMP from dCTP (dUTP route): step 2/2. This enzyme is involved in nucleotide metabolism: it produces dUMP, the immediate precursor of thymidine nucleotides and it decreases the intracellular concentration of dUTP so that uracil cannot be incorporated into DNA. The polypeptide is Deoxyuridine 5'-triphosphate nucleotidohydrolase (Parvibaculum lavamentivorans (strain DS-1 / DSM 13023 / NCIMB 13966)).